We begin with the raw amino-acid sequence, 324 residues long: Delta-aminolevulinic acid dehydratase (324 aa).

Zn(2+)-binding residues include Cys118, Cys120, and Cys128. Lys195 serves as the catalytic Schiff-base intermediate with substrate. 5-aminolevulinate is bound by residues Arg205 and Arg217. Mg(2+) is bound at residue Glu233. Catalysis depends on Lys248, which acts as the Schiff-base intermediate with substrate. 5-aminolevulinate contacts are provided by Ser274 and Tyr313.

It belongs to the ALAD family. Homooctamer. Requires Zn(2+) as cofactor.

The catalysed reaction is 2 5-aminolevulinate = porphobilinogen + 2 H2O + H(+). It functions in the pathway porphyrin-containing compound metabolism; protoporphyrin-IX biosynthesis; coproporphyrinogen-III from 5-aminolevulinate: step 1/4. Catalyzes an early step in the biosynthesis of tetrapyrroles. Binds two molecules of 5-aminolevulinate per subunit, each at a distinct site, and catalyzes their condensation to form porphobilinogen. This Staphylococcus aureus (strain NCTC 8325 / PS 47) protein is Delta-aminolevulinic acid dehydratase (hemB).